Reading from the N-terminus, the 101-residue chain is Protein SSXA1 (101 aa).

One can recognise a KRAB-related domain in the interval 19 to 83 (ETCQAFEDIS…ERVTKSVLSD (65 aa)). Residues 73–101 (KERVTKSVLSDSDEVSSHESQDKRKNPVV) are disordered. The span at 87–101 (VSSHESQDKRKNPVV) shows a compositional bias: basic and acidic residues.

This sequence belongs to the SSX family. As to expression, specifically expressed in testis (at protein level). Not detected in other tissues tested (at protein level).

The protein localises to the nucleus. In terms of biological role, could act as a modulator of transcription. The sequence is that of Protein SSXA1 from Mus musculus (Mouse).